A 594-amino-acid chain; its full sequence is Golgi-associated RAB2 interactor protein 4 (594 aa).

The tract at residues 390-525 (AAGLPVSTRQ…SSGSSKRLGR (136 aa)) is disordered. The segment covering 396–406 (STRQSKSSLSG) has biased composition (polar residues). 3 stretches are compositionally biased toward basic and acidic residues: residues 408-433 (HGRE…DKAL), 442-455 (TGES…DKIA), and 468-477 (ASRDGKKEKG). Positions 510–521 (RSSSTTSSGSSK) are enriched in low complexity.

This sequence belongs to the GARIN family. In terms of assembly, interacts (via N-terminus) with RAB2B (in GTP-bound form).

The protein resides in the golgi apparatus. Functionally, RAB2B effector protein required for the compacted Golgi morphology, probably through interaction with small GTPase RAB2B. This chain is Golgi-associated RAB2 interactor protein 4 (GARIN4), found in Macaca fascicularis (Crab-eating macaque).